Here is a 351-residue protein sequence, read N- to C-terminus: Nicotinate-nucleotide--dimethylbenzimidazole phosphoribosyltransferase (351 aa).

The active-site Proton acceptor is the E318.

Belongs to the CobT family.

It catalyses the reaction 5,6-dimethylbenzimidazole + nicotinate beta-D-ribonucleotide = alpha-ribazole 5'-phosphate + nicotinate + H(+). The protein operates within nucleoside biosynthesis; alpha-ribazole biosynthesis; alpha-ribazole from 5,6-dimethylbenzimidazole: step 1/2. Catalyzes the synthesis of alpha-ribazole-5'-phosphate from nicotinate mononucleotide (NAMN) and 5,6-dimethylbenzimidazole (DMB). This chain is Nicotinate-nucleotide--dimethylbenzimidazole phosphoribosyltransferase, found in Shewanella frigidimarina (strain NCIMB 400).